Here is a 256-residue protein sequence, read N- to C-terminus: Nickel import ATP-binding protein NikD (256 aa).

The ABC transporter domain maps to 6–245 (LEIRGLRIET…PASATARTLL (240 aa)). 38 to 45 (GASGSGKS) contributes to the ATP binding site.

The protein belongs to the ABC transporter superfamily. Nickel importer (TC 3.A.1.5.3) family. In terms of assembly, the complex is composed of two ATP-binding proteins (NikD and NikE), two transmembrane proteins (NikB and NikC) and a solute-binding protein (NikA).

It localises to the cell inner membrane. The enzyme catalyses Ni(2+)(out) + ATP + H2O = Ni(2+)(in) + ADP + phosphate + H(+). Its function is as follows. Part of the ABC transporter complex NikABCDE involved in nickel import. Responsible for energy coupling to the transport system. The protein is Nickel import ATP-binding protein NikD of Pseudomonas putida (strain ATCC 47054 / DSM 6125 / CFBP 8728 / NCIMB 11950 / KT2440).